A 28-amino-acid polypeptide reads, in one-letter code: uncharacterized protein (28 aa).

This is an uncharacterized protein from Spiroplasma virus 4 (SpV4).